A 143-amino-acid polypeptide reads, in one-letter code: Large ribosomal subunit protein uL11 (143 aa).

It belongs to the universal ribosomal protein uL11 family. As to quaternary structure, part of the ribosomal stalk of the 50S ribosomal subunit. Interacts with L10 and the large rRNA to form the base of the stalk. L10 forms an elongated spine to which L12 dimers bind in a sequential fashion forming a multimeric L10(L12)X complex. In terms of processing, one or more lysine residues are methylated.

Functionally, forms part of the ribosomal stalk which helps the ribosome interact with GTP-bound translation factors. The protein is Large ribosomal subunit protein uL11 of Allorhizobium ampelinum (strain ATCC BAA-846 / DSM 112012 / S4) (Agrobacterium vitis (strain S4)).